We begin with the raw amino-acid sequence, 250 residues long: Functional amyloid subunit FapC (250 aa).

Residues 1–24 form the signal peptide; the sequence is MKPTMALKPLVFALAALMAVAAQA. The stretch at 62–95 is one FapC_R1 repeat; sequence NNAGANGSLSNSKGNLGANIAAGSGNQQDNAAAI. The linker 1 stretch occupies residues 96 to 126; it reads TSSAGDAATVFAVADIYQESKDNKFTNKGTQ. The stretch at 127–160 is one FapC_R2 repeat; it reads NNALLNNSANNSSGNVGVNVAAGQGNQQKNNLAI. The tract at residues 161 to 199 is linker 2; that stretch reads VTADGKNVAAASNTEQVSLDNHFLNEASSKHSYKPQYVV. The stretch at 200–233 is one FapC_R3 repeat; the sequence is NNAGLLNSANNASGNIGVNVAAGAGNQQSNTLTL. The short motif at 237–240 is the Cys-X-X-Cys element; the sequence is CTVC.

The protein belongs to the FapB/FapC family. As to quaternary structure, the major component of purified amyloid fibrils. Forms fibrils in vitro; in the presence of FapA the fibrils are about 50% wider. Interacts with FapA. Fibrillates in vitro; this is inhibited by FapA. Fibrils are resistant to boiling in 2% (weight/vol) SDS and require &gt;90% (vol/vol) formic acid to dissolve.

The protein localises to the fimbrium. It is found in the secreted. In terms of biological role, the major functional amyloid subunit in this bacterium. Intrinsically disordered in its monomeric state. Upon overexpression of the endogenous six-gene locus (fapA-fapF) in situ, cells form large clumps during liquid growth, make large amounts of biofilm and produce amyloid fibrils. Expression of the 6 gene operon in E.coli strain BL21(DE3) induces flocculation and biofilm formation with copious extracellular fibrils. The polypeptide is Functional amyloid subunit FapC (Pseudomonas fluorescens).